A 149-amino-acid chain; its full sequence is Transcriptional repressor NrdR (149 aa).

A zinc finger spans residues 3 to 34; sequence CPFCNADDTKVIDSRLVADGHQVRRRRECLVC. Positions 49 to 139 constitute an ATP-cone domain; it reads PRVIKSNGVR…VYRSFEDIRE (91 aa).

It belongs to the NrdR family. The cofactor is Zn(2+).

Its function is as follows. Negatively regulates transcription of bacterial ribonucleotide reductase nrd genes and operons by binding to NrdR-boxes. This Tolumonas auensis (strain DSM 9187 / NBRC 110442 / TA 4) protein is Transcriptional repressor NrdR.